Reading from the N-terminus, the 161-residue chain is Nucleotide-binding protein LHK_01423 (161 aa).

It belongs to the YajQ family.

Nucleotide-binding protein. This Laribacter hongkongensis (strain HLHK9) protein is Nucleotide-binding protein LHK_01423.